Reading from the N-terminus, the 144-residue chain is Large ribosomal subunit protein uL16 (144 aa).

Belongs to the universal ribosomal protein uL16 family. In terms of assembly, part of the 50S ribosomal subunit.

In terms of biological role, binds 23S rRNA and is also seen to make contacts with the A and possibly P site tRNAs. This Lactiplantibacillus plantarum (strain ATCC BAA-793 / NCIMB 8826 / WCFS1) (Lactobacillus plantarum) protein is Large ribosomal subunit protein uL16.